Reading from the N-terminus, the 652-residue chain is Large subunit GTPase 1 homolog (652 aa).

Ser-93 is modified (phosphoserine). The region spanning 164–438 (WRQLWRVIER…LCDCPGLVMP (275 aa)) is the CP-type G domain. 212–215 (NKAD) is a GTP binding site. Residue Ser-252 is modified to Phosphoserine. A disordered region spans residues 288–347 (LGEAASSEEDESEYEDCQEEEEDWQTCLEDSSSSDEEACGQDCKEGHTVDSEAQGRNTPQ). Residues 293 to 311 (SSEEDESEYEDCQEEEEDW) are compositionally biased toward acidic residues. GTP is bound by residues 387–394 (GYPNVGKS) and 431–434 (DCPG). Positions 625–652 (RGAGKPWKKHGNRNKKEKSRRLYKHLDM) are disordered. Basic residues predominate over residues 630-652 (PWKKHGNRNKKEKSRRLYKHLDM).

Belongs to the TRAFAC class YlqF/YawG GTPase family. LSG1 subfamily.

The protein resides in the cytoplasm. It is found in the endoplasmic reticulum. It localises to the nucleus. Its subcellular location is the cajal body. The enzyme catalyses GTP + H2O = GDP + phosphate + H(+). Functionally, functions as a GTPase. May act by mediating the release of NMD3 from the 60S ribosomal subunit after export into the cytoplasm during the 60S ribosomal subunit maturation. The protein is Large subunit GTPase 1 homolog of Bos taurus (Bovine).